The primary structure comprises 155 residues: Transmembrane protein C1orf162 (155 aa).

A disordered region spans residues 1 to 28 (MGGNGSTCKPDTERQGTLSTAAPTTSPA). Low complexity predominate over residues 19 to 28 (STAAPTTSPA). A helical transmembrane segment spans residues 41–61 (ILAFCAGVLLTLLLIAFIFLI). A disordered region spans residues 92-114 (ADHSKPQAPDPHSDPPAKLSSIP). At Ser-140 the chain carries Phosphoserine.

The protein localises to the membrane. This Homo sapiens (Human) protein is Transmembrane protein C1orf162 (C1orf162).